The sequence spans 447 residues: GTPase Der (447 aa).

EngA-type G domains lie at 3 to 167 (PVIA…FAER) and 181 to 354 (TRIA…AAAM). GTP-binding positions include 9-16 (GRPNVGKS), 56-60 (DTGGF), 119-122 (NKAE), 187-194 (GRPNVGKS), 234-238 (DTAGL), and 299-302 (NKWD). The KH-like domain occupies 355-439 (VKLPTPKLTR…PLRIEFRTNK (85 aa)).

This sequence belongs to the TRAFAC class TrmE-Era-EngA-EngB-Septin-like GTPase superfamily. EngA (Der) GTPase family. Associates with the 50S ribosomal subunit.

Functionally, GTPase that plays an essential role in the late steps of ribosome biogenesis. The sequence is that of GTPase Der from Ralstonia pickettii (strain 12J).